The sequence spans 164 residues: Phosphopantetheine adenylyltransferase (164 aa).

Ser-9 serves as a coordination point for substrate. ATP contacts are provided by residues 9–10 (SF) and His-17. The substrate site is built by Lys-41, Val-78, and Arg-92. ATP is bound by residues 93–95 (GLR), Glu-103, and 128–134 (VRTITAT).

Belongs to the bacterial CoaD family. As to quaternary structure, homohexamer. Mg(2+) serves as cofactor.

Its subcellular location is the cytoplasm. It carries out the reaction (R)-4'-phosphopantetheine + ATP + H(+) = 3'-dephospho-CoA + diphosphate. Its pathway is cofactor biosynthesis; coenzyme A biosynthesis; CoA from (R)-pantothenate: step 4/5. Functionally, reversibly transfers an adenylyl group from ATP to 4'-phosphopantetheine, yielding dephospho-CoA (dPCoA) and pyrophosphate. In Brucella anthropi (strain ATCC 49188 / DSM 6882 / CCUG 24695 / JCM 21032 / LMG 3331 / NBRC 15819 / NCTC 12168 / Alc 37) (Ochrobactrum anthropi), this protein is Phosphopantetheine adenylyltransferase.